Here is a 252-residue protein sequence, read N- to C-terminus: MERVLIVNADDFGLSKGQNYGIVEAYRNGVVTSTTALVNGEAIDHAAQLSRELPALGVGMHFVLTLGKPVSEMPGLTRDGLLGKWIWQMAEEDTLPLDEIAHELACQYQRFIDVFGREPTHLDSHHHVHMFPQIFPIVALFAAQRGIALRIDRQTVLNADDLPSDLRSTQGFSSEFYGEEITEACFLRILDASAHRGEASLEVMCHPAFVDNIIRQSAYCYPRLTELEVLTSASLKAAIAERGYRPGSFLDI.

Positions 61 and 125 each coordinate Mg(2+).

It belongs to the YdjC deacetylase family. ChbG subfamily. As to quaternary structure, homodimer. It depends on Mg(2+) as a cofactor.

The protein localises to the cytoplasm. The catalysed reaction is N,N'-diacetylchitobiose + H2O = N-acetyl-beta-D-glucosaminyl-(1-&gt;4)-D-glucosamine + acetate. It carries out the reaction diacetylchitobiose-6'-phosphate + H2O = N'-monoacetylchitobiose-6'-phosphate + acetate. It participates in glycan degradation; chitin degradation. Its function is as follows. Involved in the degradation of chitin. ChbG is essential for growth on the acetylated chitooligosaccharides chitobiose and chitotriose but is dispensable for growth on cellobiose and chitosan dimer, the deacetylated form of chitobiose. Deacetylation of chitobiose-6-P and chitotriose-6-P is necessary for both the activation of the chb promoter by the regulatory protein ChbR and the hydrolysis of phosphorylated beta-glucosides by the phospho-beta-glucosidase ChbF. Catalyzes the removal of only one acetyl group from chitobiose-6-P to yield monoacetylchitobiose-6-P, the inducer of ChbR and the substrate of ChbF. This Salmonella heidelberg (strain SL476) protein is Chitooligosaccharide deacetylase.